The following is a 109-amino-acid chain: MEVTAKLRGAAISAQKVRLVADEVRGKSIERALDILTYSNKKGAVFVKKCLNSAIANAENNNGLDIDTLKVSTIYVDEGITLKRILPRAKGRADRISKRTCHITIKVGE.

The protein belongs to the universal ribosomal protein uL22 family. Part of the 50S ribosomal subunit.

This protein binds specifically to 23S rRNA; its binding is stimulated by other ribosomal proteins, e.g. L4, L17, and L20. It is important during the early stages of 50S assembly. It makes multiple contacts with different domains of the 23S rRNA in the assembled 50S subunit and ribosome. Its function is as follows. The globular domain of the protein is located near the polypeptide exit tunnel on the outside of the subunit, while an extended beta-hairpin is found that lines the wall of the exit tunnel in the center of the 70S ribosome. This Psychrobacter cryohalolentis (strain ATCC BAA-1226 / DSM 17306 / VKM B-2378 / K5) protein is Large ribosomal subunit protein uL22.